Here is a 58-residue protein sequence, read N- to C-terminus: UPF0391 membrane protein COXBURSA331_A2131 (58 aa).

The next 2 helical transmembrane spans lie at 3–23 (FWVLIFFIIAVIAALFGFTGI) and 30–50 (IAKILFFIFLVLFVISLIAML).

It belongs to the UPF0391 family.

The protein resides in the cell membrane. The protein is UPF0391 membrane protein COXBURSA331_A2131 of Coxiella burnetii (strain RSA 331 / Henzerling II).